The chain runs to 484 residues: Glutamate--tRNA ligase (484 aa).

The short motif at 11 to 21 (PSPTGYPHLGN) is the 'HIGH' region element. Residues Cys108, Cys110, Cys135, and Asp137 each coordinate Zn(2+). Residues 245 to 249 (KLSKR) carry the 'KMSKS' region motif. Lys248 is a binding site for ATP.

The protein belongs to the class-I aminoacyl-tRNA synthetase family. Glutamate--tRNA ligase type 1 subfamily. As to quaternary structure, monomer. Zn(2+) serves as cofactor.

The protein resides in the cytoplasm. The enzyme catalyses tRNA(Glu) + L-glutamate + ATP = L-glutamyl-tRNA(Glu) + AMP + diphosphate. Catalyzes the attachment of glutamate to tRNA(Glu) in a two-step reaction: glutamate is first activated by ATP to form Glu-AMP and then transferred to the acceptor end of tRNA(Glu). This is Glutamate--tRNA ligase from Dehalococcoides mccartyi (strain ATCC BAA-2266 / KCTC 15142 / 195) (Dehalococcoides ethenogenes (strain 195)).